Here is a 55-residue protein sequence, read N- to C-terminus: MAKGAREKIKLVSTANTGHFYTTDKNKRNMPGKMEIKKYDPVVRQHVLYKEAKIK.

This sequence belongs to the bacterial ribosomal protein bL33 family.

The polypeptide is Large ribosomal subunit protein bL33 (Aliivibrio fischeri (strain ATCC 700601 / ES114) (Vibrio fischeri)).